A 68-amino-acid polypeptide reads, in one-letter code: Conotoxin Ar5.3 (68 aa).

An N-terminal signal peptide occupies residues Met1–Ser19. The propeptide occupies Asn20–Thr53.

It belongs to the conotoxin T superfamily. Contains 2 disulfide bonds that can be either 'C1-C3, C2-C4' or 'C1-C4, C2-C3', since these disulfide connectivities have been observed for conotoxins with cysteine framework V (for examples, see AC P0DQQ7 and AC P81755). In terms of tissue distribution, expressed by the venom duct.

It is found in the secreted. The polypeptide is Conotoxin Ar5.3 (Conus arenatus (Sand-dusted cone)).